The primary structure comprises 135 residues: MISIGTDLVHISAFAEQLAQPGSSFMEVFSAGERRKANERQGSRYAEHLAGRWAAKESFIKAWSQAIYGQPPVIAEEAVVWRDIEVRADAWGRVAIELAPELAAVVRESIGEFSSSLSISHDGDYAVATCVLTIQ.

Residues Asp-7 and Glu-57 each coordinate Mg(2+).

Belongs to the P-Pant transferase superfamily. AcpS family. Mg(2+) serves as cofactor.

It localises to the cytoplasm. The catalysed reaction is apo-[ACP] + CoA = holo-[ACP] + adenosine 3',5'-bisphosphate + H(+). Transfers the 4'-phosphopantetheine moiety from coenzyme A to a Ser of acyl-carrier-protein. In Corynebacterium glutamicum (strain R), this protein is Holo-[acyl-carrier-protein] synthase.